Here is a 241-residue protein sequence, read N- to C-terminus: MLSVIGIGPGSQAMMTMEAIEALQAAEIVVGYKTYTHLVKAFTGDKQVIKTGMCREIERCQAAIELAQAGHNVALISSGDAGIYGMAGLVLELVSKQKLDVEVRLIPGMTASIAAASLLGAPLMHDFCHISLSDLLTPWPVIEKRIVAAGEADFVICFYNPRSRGREGHLARAFDLLAASKSAQTPVGVVKSAGRKKEEKWLTTLGDMDFEPVDMTSLVIVGNKTTYVQDGLMITPRGYTL.

The protein belongs to the precorrin methyltransferase family.

It catalyses the reaction Co(II)-factor III + S-adenosyl-L-methionine + H(+) = Co(II)-factor IV + S-adenosyl-L-homocysteine. The protein operates within cofactor biosynthesis; adenosylcobalamin biosynthesis; cob(II)yrinate a,c-diamide from sirohydrochlorin (anaerobic route): step 3/10. Functionally, methyltransferase that likely catalyzes the ring contraction and methylation of C-17 in cobalt-factor III to form cobalt-factor IV. May also convert cobalt-precorrin-3 to cobalt-precorrin-4. The protein is Probable cobalt-factor III C(17)-methyltransferase (cbiH) of Salmonella typhimurium (strain LT2 / SGSC1412 / ATCC 700720).